A 59-amino-acid polypeptide reads, in one-letter code: Conotoxin Ts-03 (59 aa).

Positions 1 to 19 (MRCLPVFIILLLLIPSAAS) are cleaved as a signal peptide. The propeptide occupies 20-47 (VAQPKTKDDVALASFYDNAKRTLQRHWA).

It belongs to the conotoxin T superfamily. Contains 2 disulfide bonds that can be either 'C1-C3, C2-C4' or 'C1-C4, C2-C3', since these disulfide connectivities have been observed for conotoxins with cysteine framework V (for examples, see AC P0DQQ7 and AC P81755). Expressed by the venom duct.

It localises to the secreted. The chain is Conotoxin Ts-03 from Conus tessulatus (Tessellate cone).